The sequence spans 307 residues: Retron Ec86 putative ribosyltransferase/DNA-binding protein (307 aa).

In terms of biological role, possible ribosyltransferase/DNA-binding component of antiviral defense system retron Ec86, composed of a non-coding RNA (ncRNA), a ribosyltransferase/DNA-binding protein and a reverse transcriptase (RT). Expression of the 3-gene retron confers protection against bacteriophages T5. At multiplicity of infection (MOI) of 0.02 cultures grow normally when infected with T5 without collapsing, at MOI 2 cultures enter growth stasis. The protein is Retron Ec86 putative ribosyltransferase/DNA-binding protein of Escherichia coli.